We begin with the raw amino-acid sequence, 362 residues long: DNA polymerase IV (362 aa).

A UmuC domain is found at 6–187; that stretch reads IIHVDMDAFY…LPVSSFHGVG (182 aa). Mg(2+) contacts are provided by Asp10 and Asp105. The active site involves Glu106.

The protein belongs to the DNA polymerase type-Y family. Monomer. The cofactor is Mg(2+).

It is found in the cytoplasm. It carries out the reaction DNA(n) + a 2'-deoxyribonucleoside 5'-triphosphate = DNA(n+1) + diphosphate. Functionally, poorly processive, error-prone DNA polymerase involved in untargeted mutagenesis. Copies undamaged DNA at stalled replication forks, which arise in vivo from mismatched or misaligned primer ends. These misaligned primers can be extended by PolIV. Exhibits no 3'-5' exonuclease (proofreading) activity. May be involved in translesional synthesis, in conjunction with the beta clamp from PolIII. This chain is DNA polymerase IV, found in Leptospira interrogans serogroup Icterohaemorrhagiae serovar Lai (strain 56601).